The chain runs to 445 residues: Histamine H3 receptor (445 aa).

Residues 1 to 39 (MERAPPDGPLNASGALAGEAAAAGGARGFSAAWTAVLAA) lie on the Extracellular side of the membrane. N11 is a glycosylation site (N-linked (GlcNAc...) asparagine). Residues 40 to 60 (LMALLIVATVLGNALVMLAFV) traverse the membrane as a helical segment. Over 61–70 (ADSSLRTQNN) the chain is Cytoplasmic. A helical membrane pass occupies residues 71–91 (FFLLNLAISDFLVGAFCIPLY). The Extracellular portion of the chain corresponds to 92–108 (VPYVLTGRWTFGRGLCK). A disulfide bridge connects residues C107 and C188. A helical membrane pass occupies residues 109 to 129 (LWLVVDYLLCTSSAFNIVLIS). Over 130–156 (YDRFLSVTRAVSYRAQQGDTRRAVRKM) the chain is Cytoplasmic. A helical transmembrane segment spans residues 157–177 (LLVWVLAFLLYGPAILSWEYL). The Extracellular segment spans residues 178–196 (SGGSSIPEGHCYAEFFYNW). Residues 197-217 (YFLITASTLEFFTPFLSVTFF) traverse the membrane as a helical segment. The Cytoplasmic segment spans residues 218–359 (NLSIYLNIQR…LSRDRKVAKS (142 aa)). 2 disordered regions span residues 237–260 (REAA…GCWG) and 288–336 (EATL…LEKR). Residues 242 to 257 (PEPPPEAQPSPPPPPG) show a composition bias toward pro residues. Residues 290-299 (TLGGGGGGGS) are compositionally biased toward gly residues. The segment covering 300–312 (VASPTSSSGSSSR) has biased composition (low complexity). A helical membrane pass occupies residues 360–380 (LAVIVSIFGLCWAPYTLLMII). The Extracellular portion of the chain corresponds to 381-395 (RAACHGHCVPDYWYE). Residues 396 to 416 (TSFWLLWANSAVNPVLYPLCH) traverse the membrane as a helical segment. At 417–445 (HSFRRAFTKLLCPQKLKIQPHSSLEHCWK) the chain is on the cytoplasmic side. Phosphoserine is present on S439.

This sequence belongs to the G-protein coupled receptor 1 family. Expressed predominantly in the CNS, with the greatest expression in the thalamus and caudate nucleus. The various isoforms are mainly coexpressed in brain, but their relative expression level varies in a region-specific manner. Isoform 3 and isoform 7 are highly expressed in the thalamus, caudate nucleus and cerebellum while isoform 5 and isoform 6 show a poor expression. Isoform 5 and isoform 6 show a high expression in the amygdala, substantia nigra, cerebral cortex and hypothalamus. Isoform 7 is not found in hypothalamus or substantia nigra.

The protein localises to the cell membrane. The H3 subclass of histamine receptors could mediate the histamine signals in CNS and peripheral nervous system. Signals through the inhibition of adenylate cyclase and displays high constitutive activity (spontaneous activity in the absence of agonist). Agonist stimulation of isoform 3 neither modified adenylate cyclase activity nor induced intracellular calcium mobilization. In Homo sapiens (Human), this protein is Histamine H3 receptor (HRH3).